Here is a 154-residue protein sequence, read N- to C-terminus: Deoxyuridine 5'-triphosphate nucleotidohydrolase (154 aa).

Substrate is bound by residues arginine 70–glycine 72, asparagine 83, leucine 87–aspartate 89, and methionine 97.

This sequence belongs to the dUTPase family. Mg(2+) is required as a cofactor.

The catalysed reaction is dUTP + H2O = dUMP + diphosphate + H(+). It participates in pyrimidine metabolism; dUMP biosynthesis; dUMP from dCTP (dUTP route): step 2/2. Functionally, this enzyme is involved in nucleotide metabolism: it produces dUMP, the immediate precursor of thymidine nucleotides and it decreases the intracellular concentration of dUTP so that uracil cannot be incorporated into DNA. This Buchnera aphidicola subsp. Acyrthosiphon pisum (strain 5A) protein is Deoxyuridine 5'-triphosphate nucleotidohydrolase.